A 645-amino-acid chain; its full sequence is Methionine--tRNA ligase (645 aa).

The 'HIGH' region motif lies at 13 to 23 (YYPSTNLHIGN). Positions 128, 131, 145, and 148 each coordinate Zn(2+). A 'KMSKS' region motif is present at residues 298-302 (KMSKS). An ATP-binding site is contributed by Lys301. Residues 544 to 645 (DFDKIDLRVV…GEMLTGSQVR (102 aa)) enclose the tRNA-binding domain.

The protein belongs to the class-I aminoacyl-tRNA synthetase family. MetG type 2A subfamily. Homodimer. Zn(2+) is required as a cofactor.

It localises to the cytoplasm. It carries out the reaction tRNA(Met) + L-methionine + ATP = L-methionyl-tRNA(Met) + AMP + diphosphate. Is required not only for elongation of protein synthesis but also for the initiation of all mRNA translation through initiator tRNA(fMet) aminoacylation. The chain is Methionine--tRNA ligase (metG) from Clostridium perfringens (strain 13 / Type A).